Consider the following 188-residue polypeptide: NADH-quinone oxidoreductase subunit I 2 (188 aa).

4Fe-4S ferredoxin-type domains lie at 56–88 (HFLKRDDEGEIKCVACELCARICPCDCIEVVPY) and 98–127 (AKFEIDTARCLFCGLCEDACPADAIALGQQ). [4Fe-4S] cluster contacts are provided by C68, C71, C74, C78, C107, C110, C113, and C117.

Belongs to the complex I 23 kDa subunit family. NDH-1 is composed of 14 different subunits. Subunits NuoA, H, J, K, L, M, N constitute the membrane sector of the complex. The cofactor is [4Fe-4S] cluster.

Its subcellular location is the cell inner membrane. It carries out the reaction a quinone + NADH + 5 H(+)(in) = a quinol + NAD(+) + 4 H(+)(out). Functionally, NDH-1 shuttles electrons from NADH, via FMN and iron-sulfur (Fe-S) centers, to quinones in the respiratory chain. The immediate electron acceptor for the enzyme in this species is believed to be ubiquinone. Couples the redox reaction to proton translocation (for every two electrons transferred, four hydrogen ions are translocated across the cytoplasmic membrane), and thus conserves the redox energy in a proton gradient. This Rhizobium meliloti (strain 1021) (Ensifer meliloti) protein is NADH-quinone oxidoreductase subunit I 2.